Here is a 231-residue protein sequence, read N- to C-terminus: Large ribosomal subunit protein uL1 (231 aa).

This sequence belongs to the universal ribosomal protein uL1 family. Part of the 50S ribosomal subunit.

Functionally, binds directly to 23S rRNA. The L1 stalk is quite mobile in the ribosome, and is involved in E site tRNA release. Protein L1 is also a translational repressor protein, it controls the translation of the L11 operon by binding to its mRNA. The polypeptide is Large ribosomal subunit protein uL1 (Cellvibrio japonicus (strain Ueda107) (Pseudomonas fluorescens subsp. cellulosa)).